A 555-amino-acid chain; its full sequence is Cyclin-T1.2 (555 aa).

Disordered stretches follow at residues 315–429 and 505–555; these read SYKG…NSSK and PADS…GELV. Positions 321–335 are enriched in low complexity; that stretch reads KPLSNSSDSPSTRPS. Basic and acidic residues predominate over residues 341–359; that stretch reads KNQKVVEQELMEQRMKEAA. Positions 382–398 are enriched in low complexity; that stretch reads TSSSASNNSNHQNRSSS. Residues 521-543 are compositionally biased toward pro residues; sequence PDEPSPPVSQILLPPPPPPPILP.

It belongs to the cyclin family. Cyclin C subfamily.

Its function is as follows. Regulatory subunit of the cyclin-dependent kinase pair (CDK9/cyclin T) complex, also called positive transcription elongation factor B (P-TEFb), which is proposed to facilitate the transition from abortive to production elongation by phosphorylating the CTD (carboxy-terminal domain) of the large subunit of RNA polymerase II (RNAP II). The chain is Cyclin-T1.2 (cit-1.2) from Caenorhabditis elegans.